Consider the following 266-residue polypeptide: UPF0328 protein ECU03_0130 (266 aa).

The protein belongs to the UPF0328 family.

The chain is UPF0328 protein ECU03_0130 from Encephalitozoon cuniculi (strain GB-M1) (Microsporidian parasite).